A 368-amino-acid polypeptide reads, in one-letter code: Probable endopolygalacturonase I (368 aa).

A signal peptide spans 1 to 18; that stretch reads MHSYQLLGLAAVGSLVSA. Positions 19–31 are excised as a propeptide; sequence APAPSRVSEFAKK. Cys-35 and Cys-50 are joined by a disulfide. PbH1 repeat units lie at residues 140 to 161, 162 to 192, and 193 to 214; these read VEDS…ISVQ, ATNV…DISE, and STGV…AINS. Catalysis depends on Asp-207, which acts as the Proton donor. The cysteines at positions 209 and 225 are disulfide-linked. His-229 is a catalytic residue. 3 PbH1 repeats span residues 244–265, 273–295, and 307–352; these read VKNV…RIKT, VSEI…VIEQ, and STGI…DLSG. Residue Asn-246 is glycosylated (N-linked (GlcNAc...) asparagine). 2 cysteine pairs are disulfide-bonded: Cys-335-Cys-340 and Cys-359-Cys-368.

The protein belongs to the glycosyl hydrolase 28 family.

The protein resides in the secreted. It carries out the reaction (1,4-alpha-D-galacturonosyl)n+m + H2O = (1,4-alpha-D-galacturonosyl)n + (1,4-alpha-D-galacturonosyl)m.. Involved in maceration and soft-rotting of plant tissue. Hydrolyzes the 1,4-alpha glycosidic bonds of de-esterified pectate in the smooth region of the plant cell wall. The polypeptide is Probable endopolygalacturonase I (pgaI) (Aspergillus niger (strain ATCC MYA-4892 / CBS 513.88 / FGSC A1513)).